We begin with the raw amino-acid sequence, 460 residues long: MEFSEWYSDILEKAGIYDLRYPIKGCGVYLPYGFKIRRYSFEILRKLLDETGHDETLFPMLIPENLLAKEGEHIKGFEDEVFWVTHGGKTPLEVKLALRPTSETTMYYMMKQWIKVHTDLPLKLYQVVNTFRYETKHTRPLIRLREIMSFKEAHTAHATKKECDAQIEEALTLYKAFFDEIGVPYVISKRPEWDKFPGADYTMAFDTIYPDGKTMQIGTVHNLGQNFAKTFELEFETPDGEKDFVYQTCYGISDRAIASLISVHGDEKGLVIPVDVAPIQIVLIPLLFKGKEEIVMDKIKELNNTLKSEFRVHLDDRDIRPGRKYNDWELKGVPLRIELGPRDIENGHALIVRRDTGEKITVEYSNILEEVEKIVSMYKENLKLKAEEKVKSFITVLDFENDVNSLSEKVKAKLLENKGIILIPFNESIYNEEFEELIDASVLGLTTYEGKEYISVARTY.

The protein belongs to the class-II aminoacyl-tRNA synthetase family. ProS type 3 subfamily. Homodimer.

It is found in the cytoplasm. The catalysed reaction is tRNA(Pro) + L-proline + ATP = L-prolyl-tRNA(Pro) + AMP + diphosphate. Functionally, catalyzes the attachment of proline to tRNA(Pro) in a two-step reaction: proline is first activated by ATP to form Pro-AMP and then transferred to the acceptor end of tRNA(Pro). In Methanococcus maripaludis (strain DSM 14266 / JCM 13030 / NBRC 101832 / S2 / LL), this protein is Proline--tRNA ligase.